We begin with the raw amino-acid sequence, 393 residues long: Phosphoglycerate kinase (393 aa).

Residues 21–23 (DLN), Arg36, 59–62 (HLGR), Arg113, and Arg146 each bind substrate. ATP contacts are provided by residues Lys197, Glu319, and 345–348 (GGDT).

This sequence belongs to the phosphoglycerate kinase family. In terms of assembly, monomer.

It is found in the cytoplasm. The enzyme catalyses (2R)-3-phosphoglycerate + ATP = (2R)-3-phospho-glyceroyl phosphate + ADP. Its pathway is carbohydrate degradation; glycolysis; pyruvate from D-glyceraldehyde 3-phosphate: step 2/5. In Nitratidesulfovibrio vulgaris (strain ATCC 29579 / DSM 644 / CCUG 34227 / NCIMB 8303 / VKM B-1760 / Hildenborough) (Desulfovibrio vulgaris), this protein is Phosphoglycerate kinase.